The following is a 109-amino-acid chain: uncharacterized protein (109 aa).

In terms of domain architecture, HTH cro/C1-type spans 42–100 (LEEKLKQEKIDRKYLAEVTNIPYTTVSRIMRAEANREFNPEIDTILKIAKYFNCTMDEV). Positions 53-72 (RKYLAEVTNIPYTTVSRIMR) form a DNA-binding region, H-T-H motif.

This is an uncharacterized protein from Rickettsia conorii (strain ATCC VR-613 / Malish 7).